The following is a 214-amino-acid chain: Large ribosomal subunit protein bL25 (214 aa).

Disordered stretches follow at residues 1–23 and 182–214; these read MSNE…SRRL and DHDQ…ASEE. Residues 200–214 show a composition bias toward acidic residues; that stretch reads DDDDAAEGEEAASEE.

The protein belongs to the bacterial ribosomal protein bL25 family. CTC subfamily. Part of the 50S ribosomal subunit; part of the 5S rRNA/L5/L18/L25 subcomplex. Contacts the 5S rRNA. Binds to the 5S rRNA independently of L5 and L18.

In terms of biological role, this is one of the proteins that binds to the 5S RNA in the ribosome where it forms part of the central protuberance. The sequence is that of Large ribosomal subunit protein bL25 from Alcanivorax borkumensis (strain ATCC 700651 / DSM 11573 / NCIMB 13689 / SK2).